A 395-amino-acid polypeptide reads, in one-letter code: Receptor-like cytoplasmic kinase 176 (395 aa).

The disordered stretch occupies residues 1-45 (MGNCWGAKISSESPCRSASSPSGGTSKYASNSSVSAASVPPTPRS). Composition is skewed to low complexity over residues 10 to 22 (SSES…SSPS) and 29 to 39 (ASNSSVSAASV). The Protein kinase domain occupies 70–355 (FRPDSVLGEG…EQVVAVLEQL (286 aa)). ATP contacts are provided by residues 76–84 (LGEGGFGSV) and Lys-108. The active-site Proton acceptor is the Asp-205. The interval 359 to 395 (KETGANPQLQKKSSSKNAGSNGSKPSSKGKPANARLV) is disordered. Over residues 369 to 395 (KKSSSKNAGSNGSKPSSKGKPANARLV) the composition is skewed to low complexity.

This sequence belongs to the protein kinase superfamily. Ser/Thr protein kinase family. Interacts with CERK1.

It catalyses the reaction L-seryl-[protein] + ATP = O-phospho-L-seryl-[protein] + ADP + H(+). The enzyme catalyses L-threonyl-[protein] + ATP = O-phospho-L-threonyl-[protein] + ADP + H(+). Functionally, functions downstream of CERK1 in the microbial peptidoglycans (PGNs) and fungal chitin signaling pathways that mediate innate immunity. Participates in the activation of defense genes during response to PGN and chitin. The polypeptide is Receptor-like cytoplasmic kinase 176 (Oryza sativa subsp. japonica (Rice)).